The primary structure comprises 513 residues: Noroxomaritidine synthase 1 (513 aa).

A helical transmembrane segment spans residues 18–34; it reads ILIAIACLVVFSLLRSA. Heme is bound at residue Cys458.

Belongs to the cytochrome P450 family. It depends on heme as a cofactor. Mostly expressed in stems, and, to a lower extent, in bulbs, roots, leaves and flowers.

It localises to the membrane. It carries out the reaction 4'-O-methylnorbelladine + reduced [NADPH--hemoprotein reductase] + O2 = (10bR,4aS)-noroxomaritidine + oxidized [NADPH--hemoprotein reductase] + 2 H2O + H(+). The catalysed reaction is 4'-O-methylnorbelladine + reduced [NADPH--hemoprotein reductase] + O2 = (10bS,4aR)-noroxomaritidine + oxidized [NADPH--hemoprotein reductase] + 2 H2O + H(+). It participates in alkaloid biosynthesis. Functionally, cytochrome P450 that catalyzes an intramolecular para-para' C-C phenol coupling of 4'-O-methylnorbelladine in alkaloids biosynthesis, including haemanthamine- and crinamine-type alkaloids, promising anticancer agents. Catalyzes the formation of (10bR,4aS)-noroxomaritidine and (10bS,4aR)-noroxomaritidine from 4'-O-methylnorbelladine. In Narcissus pseudonarcissus (Daffodil), this protein is Noroxomaritidine synthase 1.